The following is a 571-amino-acid chain: Glutamate--tRNA ligase (571 aa).

Residues 114 to 124 carry the 'HIGH' region motif; that stretch reads PNPNGPWHVGH. The disordered stretch occupies residues 431-453; that stretch reads KPLAGGPESASPPLHPNDEDRGR.

This sequence belongs to the class-I aminoacyl-tRNA synthetase family. Glutamate--tRNA ligase type 2 subfamily.

The protein localises to the cytoplasm. It catalyses the reaction tRNA(Glu) + L-glutamate + ATP = L-glutamyl-tRNA(Glu) + AMP + diphosphate. Functionally, catalyzes the attachment of glutamate to tRNA(Glu) in a two-step reaction: glutamate is first activated by ATP to form Glu-AMP and then transferred to the acceptor end of tRNA(Glu). This is Glutamate--tRNA ligase from Natronomonas pharaonis (strain ATCC 35678 / DSM 2160 / CIP 103997 / JCM 8858 / NBRC 14720 / NCIMB 2260 / Gabara) (Halobacterium pharaonis).